A 330-amino-acid chain; its full sequence is Adenylate isopentenyltransferase 5, chloroplastic (330 aa).

The N-terminal 39 residues, 1 to 39, are a transit peptide targeting the chloroplast; the sequence is MKPCMTALRQVIQPLSLNFQGNMVDVPFFRRKDKVVFVM. Position 40–47 (40–47) interacts with ATP; it reads GATGTGKS.

This sequence belongs to the IPP transferase family. As to expression, expressed in root primordia, columella root caps, upper part of young inflorescences, and fruit abscission zones.

Its subcellular location is the plastid. It localises to the chloroplast. It carries out the reaction dimethylallyl diphosphate + ADP = N(6)-(dimethylallyl)adenosine 5'-diphosphate + diphosphate. It catalyses the reaction dimethylallyl diphosphate + ATP = N(6)-(dimethylallyl)adenosine 5'-triphosphate + diphosphate. In terms of biological role, involved in cytokinin biosynthesis. Catalyzes the transfer of an isopentenyl group from dimethylallyl diphosphate (DMAPP) to ATP and ADP. This Arabidopsis thaliana (Mouse-ear cress) protein is Adenylate isopentenyltransferase 5, chloroplastic (IPT5).